The sequence spans 596 residues: Pentatricopeptide repeat-containing protein At1g50270 (596 aa).

PPR repeat units follow at residues serine 66 to proline 102, serine 103 to serine 136, aspartate 137 to lysine 167, aspartate 168 to alanine 202, asparagine 203 to lysine 237, aspartate 239 to arginine 269, asparagine 270 to proline 304, asparagine 305 to isoleucine 339, asparagine 340 to lysine 370, asparagine 371 to proline 405, asparagine 406 to arginine 436, and lysine 442 to glutamate 472. Residues valine 477–lysine 552 are type E motif. The type E(+) motif stretch occupies residues glycine 553–arginine 584.

It belongs to the PPR family. PCMP-E subfamily.

The chain is Pentatricopeptide repeat-containing protein At1g50270 (PCMP-E42) from Arabidopsis thaliana (Mouse-ear cress).